The following is a 1128-amino-acid chain: Phytochrome A (1128 aa).

Positions 1–21 (MSSSRPTQCSSSSSRTRQSSR) are enriched in low complexity. The tract at residues 1–24 (MSSSRPTQCSSSSSRTRQSSRARI) is disordered. Residues 219–404 (SMEVLCNTVV…VFAVHVNKEF (186 aa)) form the GAF domain. C324 contacts phytochromobilin. 2 consecutive PAS domains span residues 620-690 (VTSE…LQGK) and 750-834 (VEGD…LAGD). One can recognise a Histidine kinase domain in the interval 904-1124 (YMRHAINNPL…TFILSVELAS (221 aa)).

The protein belongs to the phytochrome family. In terms of assembly, homodimer. In terms of processing, contains one covalently linked phytochromobilin chromophore.

Its function is as follows. Regulatory photoreceptor which exists in two forms that are reversibly interconvertible by light: the Pr form that absorbs maximally in the red region of the spectrum and the Pfr form that absorbs maximally in the far-red region. Photoconversion of Pr to Pfr induces an array of morphogenic responses, whereas reconversion of Pfr to Pr cancels the induction of those responses. Pfr controls the expression of a number of nuclear genes including those encoding the small subunit of ribulose-bisphosphate carboxylase, chlorophyll A/B binding protein, protochlorophyllide reductase, rRNA, etc. It also controls the expression of its own gene(s) in a negative feedback fashion. In Oryza sativa subsp. indica (Rice), this protein is Phytochrome A (PHYA).